The chain runs to 968 residues: uncharacterized protein (968 aa).

An N-terminal signal peptide occupies residues 1–27; that stretch reads MHSWKKKLVVSQLALACTLAITSQANA. In terms of domain architecture, Autotransporter spans 703 to 968; it reads GLADNGGAWV…SANVGVKYTW (266 aa).

This is an uncharacterized protein from Escherichia coli (strain K12).